Consider the following 441-residue polypeptide: Homogentisate 1,2-dioxygenase (441 aa).

His297 (proton acceptor) is an active-site residue. Positions 340 and 346 each coordinate Fe cation. Homogentisate-binding residues include Tyr355 and His376. His376 lines the Fe cation pocket.

This sequence belongs to the homogentisate dioxygenase family. As to quaternary structure, hexamer; dimer of trimers. It depends on Fe cation as a cofactor.

It catalyses the reaction homogentisate + O2 = 4-maleylacetoacetate + H(+). It participates in amino-acid degradation; L-phenylalanine degradation; acetoacetate and fumarate from L-phenylalanine: step 4/6. In terms of biological role, involved in the catabolism of homogentisate (2,5-dihydroxyphenylacetate or 2,5-OH-PhAc), a central intermediate in the degradation of phenylalanine and tyrosine. Catalyzes the oxidative ring cleavage of the aromatic ring of homogentisate to yield maleylacetoacetate. This Streptomyces coelicolor (strain ATCC BAA-471 / A3(2) / M145) protein is Homogentisate 1,2-dioxygenase.